The primary structure comprises 415 residues: Actin-like protein 7B (415 aa).

A disordered region spans residues 1-31; the sequence is MATRNSPMPLGTAQGDPGEAGTRPGPDASLR. At serine 6 the chain carries Phosphoserine.

This sequence belongs to the actin family. In terms of tissue distribution, detected only in the testis and, to a lesser extent, in the prostate.

It is found in the cytoplasm. It localises to the cytoskeleton. The polypeptide is Actin-like protein 7B (ACTL7B) (Homo sapiens (Human)).